We begin with the raw amino-acid sequence, 373 residues long: Cytoplasmic tRNA 2-thiolation protein 1 (373 aa).

This sequence belongs to the TtcA family. CTU1/NCS6/ATPBD3 subfamily.

It is found in the cytoplasm. It participates in tRNA modification; 5-methoxycarbonylmethyl-2-thiouridine-tRNA biosynthesis. Functionally, plays a central role in 2-thiolation of mcm(5)S(2)U at tRNA wobble positions of tRNA(Lys), tRNA(Glu) and tRNA(Gln). Directly binds tRNAs and probably acts by catalyzing adenylation of tRNAs, an intermediate required for 2-thiolation. It is unclear whether it acts as a sulfurtransferase that transfers sulfur from thiocarboxylated URM1 onto the uridine of tRNAs at wobble position. Prior mcm(5) tRNA modification by the elongator complex is required for 2-thiolation. May also be involved in protein urmylation. In Malassezia globosa (strain ATCC MYA-4612 / CBS 7966) (Dandruff-associated fungus), this protein is Cytoplasmic tRNA 2-thiolation protein 1.